The primary structure comprises 360 residues: CCA-adding enzyme (360 aa).

Gly8 and Arg11 together coordinate ATP. CTP-binding residues include Gly8 and Arg11. The Mg(2+) site is built by Asp21 and Asp23. Arg91, Arg137, and Arg140 together coordinate ATP. CTP is bound by residues Arg91, Arg137, and Arg140.

It belongs to the tRNA nucleotidyltransferase/poly(A) polymerase family. Bacterial CCA-adding enzyme type 2 subfamily. Requires Mg(2+) as cofactor.

It catalyses the reaction a tRNA precursor + 2 CTP + ATP = a tRNA with a 3' CCA end + 3 diphosphate. The enzyme catalyses a tRNA with a 3' CCA end + 2 CTP + ATP = a tRNA with a 3' CCACCA end + 3 diphosphate. Its function is as follows. Catalyzes the addition and repair of the essential 3'-terminal CCA sequence in tRNAs without using a nucleic acid template. Adds these three nucleotides in the order of C, C, and A to the tRNA nucleotide-73, using CTP and ATP as substrates and producing inorganic pyrophosphate. tRNA 3'-terminal CCA addition is required both for tRNA processing and repair. Also involved in tRNA surveillance by mediating tandem CCA addition to generate a CCACCA at the 3' terminus of unstable tRNAs. While stable tRNAs receive only 3'-terminal CCA, unstable tRNAs are marked with CCACCA and rapidly degraded. The protein is CCA-adding enzyme of Francisella tularensis subsp. tularensis (strain FSC 198).